Consider the following 361-residue polypeptide: DNA replication and repair protein RecF (361 aa).

An ATP-binding site is contributed by glycine 30–threonine 37.

Belongs to the RecF family.

The protein resides in the cytoplasm. Its function is as follows. The RecF protein is involved in DNA metabolism; it is required for DNA replication and normal SOS inducibility. RecF binds preferentially to single-stranded, linear DNA. It also seems to bind ATP. The protein is DNA replication and repair protein RecF of Glaesserella parasuis serovar 5 (strain SH0165) (Haemophilus parasuis).